The chain runs to 473 residues: Cysteine--tRNA ligase (473 aa).

Cys30 is a binding site for Zn(2+). Positions 32-42 match the 'HIGH' region motif; it reads MTVYDYCHIGH. Zn(2+) is bound by residues Cys213, His238, and Glu242. The 'KMSKS' region motif lies at 270–274; it reads KMSKS. ATP is bound at residue Lys273.

Belongs to the class-I aminoacyl-tRNA synthetase family. As to quaternary structure, monomer. The cofactor is Zn(2+).

It localises to the cytoplasm. The enzyme catalyses tRNA(Cys) + L-cysteine + ATP = L-cysteinyl-tRNA(Cys) + AMP + diphosphate. This is Cysteine--tRNA ligase from Acinetobacter baumannii (strain SDF).